The chain runs to 339 residues: Protein FAM50A (339 aa).

The tract at residues 1–31 (MAQYKGAASEAGRAMHLMKKREKQREQMEQM) is disordered. The residue at position 2 (Ala2) is an N-acetylalanine. Residue Lys100 forms a Glycyl lysine isopeptide (Lys-Gly) (interchain with G-Cter in SUMO2) linkage. The tract at residues 121–177 (SFTLEEEEEGGEEEEEAAMYEEEMEREEITTKKRKLGKNPDVDTSFLPDRDREEEEN) is disordered. Acidic residues predominate over residues 124 to 146 (LEEEEEGGEEEEEAAMYEEEMER). A Nuclear localization signal motif is present at residues 152-155 (KKRK). A compositionally biased stretch (basic and acidic residues) spans 168-177 (PDRDREEEEN).

Belongs to the FAM50 family. In terms of assembly, interacts with EFTUD2, a component of the spliceosome U5 complex. Interacts with DDX41, a component of the spliceosome C complex. Widely expressed in fetal and adult tissues. Mostly abundant in fetal brain, liver and kidney; in the adult, high levels were also observed in heart, skeletal muscle, spleen, thymus, prostate and small intestine. Expressed in fetal cerebellum and hypothalamus. Low expression is observed in fetal temporal lobe.

Its subcellular location is the nucleus. Its function is as follows. Probably involved in the regulation of pre-mRNA splicing. This is Protein FAM50A (FAM50A) from Homo sapiens (Human).